The primary structure comprises 1031 residues: Error-prone DNA polymerase (1031 aa).

Belongs to the DNA polymerase type-C family. DnaE2 subfamily.

The protein resides in the cytoplasm. It carries out the reaction DNA(n) + a 2'-deoxyribonucleoside 5'-triphosphate = DNA(n+1) + diphosphate. Functionally, DNA polymerase involved in damage-induced mutagenesis and translesion synthesis (TLS). It is not the major replicative DNA polymerase. The sequence is that of Error-prone DNA polymerase from Pseudomonas syringae pv. tomato (strain ATCC BAA-871 / DC3000).